We begin with the raw amino-acid sequence, 269 residues long: 2-keto-4-pentenoate hydratase (269 aa).

It belongs to the hydratase/decarboxylase family. MhpD subfamily. The cofactor is a divalent metal cation.

It catalyses the reaction (S)-4-hydroxy-2-oxopentanoate = (2Z)-2-hydroxypenta-2,4-dienoate + H2O. Its pathway is aromatic compound metabolism; 3-phenylpropanoate degradation. Catalyzes the conversion of 2-hydroxypentadienoic acid (enolic form of 2-oxopent-4-enoate) to 4-hydroxy-2-ketopentanoic acid. In Paraburkholderia xenovorans (strain LB400), this protein is 2-keto-4-pentenoate hydratase.